The primary structure comprises 599 residues: Potassium-transporting ATPase potassium-binding subunit (599 aa).

12 consecutive transmembrane segments (helical) span residues 8–28 (LLAL…IWLA), 61–81 (WQYA…VYAL), 133–153 (ALAV…FALF), 176–196 (AWLL…NGVI), 280–300 (LTNF…CFAF), 311–331 (WAVL…ITPA), 366–386 (INAS…AVIA), 391–411 (FTPL…VVFG), 416–436 (GLYG…LMIG), 456–476 (IAIL…VLAG), 521–541 (LLGL…LAIA), and 563–583 (LFVL…YVPA).

Belongs to the KdpA family. In terms of assembly, the system is composed of three essential subunits: KdpA, KdpB and KdpC.

It localises to the cell inner membrane. Functionally, part of the high-affinity ATP-driven potassium transport (or Kdp) system, which catalyzes the hydrolysis of ATP coupled with the electrogenic transport of potassium into the cytoplasm. This subunit binds the periplasmic potassium ions and delivers the ions to the membrane domain of KdpB through an intramembrane tunnel. This Polaromonas naphthalenivorans (strain CJ2) protein is Potassium-transporting ATPase potassium-binding subunit.